The chain runs to 436 residues: Serine protease inhibitor A6 (436 aa).

A signal peptide spans 1–16 (MHLLVYLSLFFALALA). The segment at 26-60 (KHRHRHEQQGHHDSAKHGHQKDKQQQEQIKNDEGK) is disordered. Positions 32–60 (EQQGHHDSAKHGHQKDKQQQEQIKNDEGK) are enriched in basic and acidic residues. Asn260 and Asn289 each carry an N-linked (GlcNAc...) asparagine glycan.

Belongs to the serpin family. Liver.

The protein localises to the secreted. It is found in the extracellular space. Not yet known. The chain is Serine protease inhibitor A6 (serpina6) from Xenopus laevis (African clawed frog).